The following is a 145-amino-acid chain: Gene 34.1 protein (145 aa).

Its function is as follows. Putative excisionase. In Mycobacterium (Mycobacteriophage D29), this protein is Gene 34.1 protein (34.1).